Here is a 147-residue protein sequence, read N- to C-terminus: MQITKTLVATLFAASTAFAAPTPADKSMMAAVPEWTITNLKRVCNAGNTSCTWTFGVDTHLATATSCTYVVKANANASQASGGPVTCGPYTITSSWSGQFGPNNGFTTFAVTDFSKKLIVWPAYTDVQVQAGKVVSPNQSYAPANLP.

The signal sequence occupies residues Met1–Ala19. 2 disulfides stabilise this stretch: Cys44–Cys51 and Cys67–Cys87.

As to quaternary structure, homodimer.

It is found in the secreted. Its function is as follows. Stimulates salicylic acid signaling in host plant roots. This chain is Effector TSP1, found in Hypocrea virens (strain Gv29-8 / FGSC 10586) (Gliocladium virens).